A 547-amino-acid chain; its full sequence is Nuclear speckle splicing regulatory protein 1 (547 aa).

A disordered region spans residues 25–51; sequence KPSVFGNDSDDDEASVSESLQREAAKK. 2 positions are modified to phosphoserine: serine 27 and serine 33. A coiled-coil region spans residues 103–177; that stretch reads IHNLLKAVEI…EARLDVTKQK (75 aa). Residues 105–169 are necessary for alternative splicing activity; it reads NLLKAVEIRK…REKRAAALEA (65 aa). Positions 188–523 are disordered; that stretch reads NQAVGEEAVP…KRSNEETVMS (336 aa). Residues lysine 198 and lysine 209 each participate in a glycyl lysine isopeptide (Lys-Gly) (interchain with G-Cter in SUMO2) cross-link. Residues 200–217 are compositionally biased toward basic and acidic residues; that stretch reads SFREARTVIKEEKLRGYP. Over residues 223–232 the composition is skewed to polar residues; the sequence is ENRPQQNCAL. The segment covering 237–254 has biased composition (acidic residues); the sequence is EEAEENPDADSDSEESCD. Phosphoserine occurs at positions 247 and 252. Residues 255–269 show a composition bias toward basic and acidic residues; that stretch reads DGERGDHKVKSRGEE. An N6-acetyllysine modification is found at lysine 276. The segment covering 277–287 has biased composition (basic residues); the sequence is YLKHHKNHTHS. Lysine 279 participates in a covalent cross-link: Glycyl lysine isopeptide (Lys-Gly) (interchain with G-Cter in SUMO2). Over residues 308–339 the composition is skewed to basic and acidic residues; that stretch reads RGHEHKGGQHQDRQSRDQESCHKDRSHREEKS. Residues 340-355 show a composition bias toward basic residues; it reads SHRHREASHKDHHWKR. Basic and acidic residues-rich tracts occupy residues 356-480 and 490-506; these read HEHE…KPPR and RLTEERPEKGSQPERPP. The stretch at 376–417 forms a coiled coil; sequence KREKYSSREQEKDRQWNDHDRYSEKEKKGKEKEEHRKARRER. The residue at position 447 (serine 447) is a Phosphoserine.

It belongs to the NSRP1 family. In terms of assembly, interacts (via C-terminus) with SRSF1. Interacts (via C-terminus) with SRSF2.

The protein resides in the nucleus. It localises to the nucleus speckle. Its function is as follows. RNA-binding protein that mediates pre-mRNA alternative splicing regulation. The protein is Nuclear speckle splicing regulatory protein 1 (Nsrp1) of Rattus norvegicus (Rat).